Here is a 139-residue protein sequence, read N- to C-terminus: Putative nickel-responsive regulator (139 aa).

Ni(2+) contacts are provided by His79, His90, His92, and Cys98.

It belongs to the transcriptional regulatory CopG/NikR family. Ni(2+) is required as a cofactor.

Transcriptional regulator. The protein is Putative nickel-responsive regulator of Nitratidesulfovibrio vulgaris (strain DSM 19637 / Miyazaki F) (Desulfovibrio vulgaris).